The chain runs to 155 residues: Snaclec bothrojaracin subunit alpha (155 aa).

An N-terminal signal peptide occupies residues 1–23; sequence MGRFLFVSFGLLVVFLSLSGTAA. 3 cysteine pairs are disulfide-bonded: cysteine 25-cysteine 36, cysteine 53-cysteine 150, and cysteine 125-cysteine 142. One can recognise a C-type lectin domain in the interval 32-151; it reads HEGHCYKFFQ…CGQQNPFVCK (120 aa).

The protein belongs to the snaclec family. As to quaternary structure, heterodimer of subunits alpha and beta; disulfide-linked. As to expression, expressed by the venom gland.

The protein localises to the secreted. In terms of biological role, this potent antithrombotic agent acts in a calcium-independent manner. Exerts its anticoagulant effect by two distinct mechanisms. It binds to activated thrombin through exosite 1, blocking fibrinogen clotting, platelet activation, factor V activation and other effects, and it interacts with prothrombin (F2), decreasing its proteolytic activation -especially in the presence of factor Va. In vivo, intravenous injection before thrombosis induction causes a significant decrease in thrombus weight. Furthermore, BJC shows a prolonged effect by remaining in the plasma bound to prothrombin for at least 12 hours. The polypeptide is Snaclec bothrojaracin subunit alpha (Bothrops jararaca (Jararaca)).